The primary structure comprises 512 residues: 2-isopropylmalate synthase (512 aa).

A Pyruvate carboxyltransferase domain is found at 5–268 (LIIFDTTLRD…DVDIETQHIL (264 aa)). The Mn(2+) site is built by aspartate 14, histidine 202, histidine 204, and asparagine 239. The tract at residues 394-512 (SFVSLSQHSE…SKADRVAAQG (119 aa)) is regulatory domain.

The protein belongs to the alpha-IPM synthase/homocitrate synthase family. LeuA type 1 subfamily. In terms of assembly, homodimer. Mn(2+) is required as a cofactor.

Its subcellular location is the cytoplasm. It carries out the reaction 3-methyl-2-oxobutanoate + acetyl-CoA + H2O = (2S)-2-isopropylmalate + CoA + H(+). It participates in amino-acid biosynthesis; L-leucine biosynthesis; L-leucine from 3-methyl-2-oxobutanoate: step 1/4. Functionally, catalyzes the condensation of the acetyl group of acetyl-CoA with 3-methyl-2-oxobutanoate (2-ketoisovalerate) to form 3-carboxy-3-hydroxy-4-methylpentanoate (2-isopropylmalate). This is 2-isopropylmalate synthase from Albidiferax ferrireducens (strain ATCC BAA-621 / DSM 15236 / T118) (Rhodoferax ferrireducens).